A 479-amino-acid chain; its full sequence is MTAPSATAFSSATTQPTTEGNASMRKRTIPVVPSVPERKWDPKAPKHIQEQPWTMQNWWRHLNWLHCMLIFGLPMIAIYGVFTTPLQTKTLIFAIIYYAYSGLGITAGYHRLWSHRAYKAKKPLEYFLAAGGAAAFEGSIRWWSRDHRAHHRYTDTDKDPYNVKKGFWYAHVGWMIILQNPRRIGRSDVSDLNSDPFVMFNHRHFLPIASFMAFIFPSLFCGLLWGDYRGGYFYAGVCRLVFVHHATFCVNSLAHLIGSQPFDDTNSARNHFITALVTLGEGNHNYHHAFPNDYRNGLRWYEYDPTKIFIYIASLFGLAYNLNTFPDNEIQKGIVQQKQKVLDRWRAKLNWGIPLEQLPVMEFEDFLEQSKTRPLVLINGVVHDMTGFEHPGGQGLLRSAFGKDATAAFNGGVYDHTNGAHNLLSTYRVAVVRGGMEVEVWKSGAGAQLPMKDTQGQKIVRVGEQITRIQPPIEAAAAN.

Low complexity predominate over residues Met1–Thr18. Positions Met1–Thr28 are disordered. Residues Met1–His61 lie on the Cytoplasmic side of the membrane. Residues Leu62–Phe82 traverse the membrane as a helical segment. Topologically, residues Thr83–Lys89 are lumenal. The helical transmembrane segment at Thr90 to His110 threads the bilayer. Residues His110, His115, His147, His150, and His151 each contribute to the Fe cation site. The Histidine box-1 signature appears at His110–His115. Topologically, residues Arg111–His204 are cytoplasmic. A Histidine box-2 motif is present at residues His147–His151. Residues Phe205 to Trp225 traverse the membrane as a helical segment. The Lumenal portion of the chain corresponds to Gly226–Arg229. The chain crosses the membrane as a helical span at residues Gly230 to Val250. Residues Asn251–Asn479 lie on the Cytoplasmic side of the membrane. His255, His284, His287, and His288 together coordinate Fe cation. The Histidine box-3 motif lies at His284–His288. The 77-residue stretch at Gln357 to Arg433 folds into the Cytochrome b5 heme-binding domain. Positions 390 and 416 each coordinate heme.

Belongs to the fatty acid desaturase type 1 family. It depends on Fe(2+) as a cofactor.

The protein resides in the membrane. The catalysed reaction is octadecanoyl-CoA + 2 Fe(II)-[cytochrome b5] + O2 + 2 H(+) = (9Z)-octadecenoyl-CoA + 2 Fe(III)-[cytochrome b5] + 2 H2O. Functionally, stearoyl-CoA desaturase that utilizes O(2) and electrons from reduced cytochrome b5 to introduce the first double bond into saturated fatty acyl-CoA substrates. Catalyzes the insertion of a cis double bond at the delta-9 position into fatty acyl-CoA substrates including palmitoyl-CoA and stearoyl-CoA. Contributes to the biosynthesis of membrane phospholipids, cholesterol esters and triglycerides. This is Probable acyl-CoA desaturase from Schizosaccharomyces pombe (strain 972 / ATCC 24843) (Fission yeast).